The chain runs to 248 residues: Adenosylcobinamide-GDP ribazoletransferase (248 aa).

A run of 6 helical transmembrane segments spans residues 36–56 (FFLP…YLGL), 59–79 (FLPA…ITGG), 114–134 (GTIA…SLVL), 137–157 (YSIA…FLCL), 170–190 (IFIG…VLVL), and 199–219 (ATII…LLCL).

This sequence belongs to the CobS family. Mg(2+) serves as cofactor.

The protein resides in the cell membrane. The enzyme catalyses alpha-ribazole + adenosylcob(III)inamide-GDP = adenosylcob(III)alamin + GMP + H(+). It catalyses the reaction alpha-ribazole 5'-phosphate + adenosylcob(III)inamide-GDP = adenosylcob(III)alamin 5'-phosphate + GMP + H(+). It participates in cofactor biosynthesis; adenosylcobalamin biosynthesis; adenosylcobalamin from cob(II)yrinate a,c-diamide: step 7/7. Its function is as follows. Joins adenosylcobinamide-GDP and alpha-ribazole to generate adenosylcobalamin (Ado-cobalamin). Also synthesizes adenosylcobalamin 5'-phosphate from adenosylcobinamide-GDP and alpha-ribazole 5'-phosphate. The chain is Adenosylcobinamide-GDP ribazoletransferase from Clostridium botulinum (strain Langeland / NCTC 10281 / Type F).